A 292-amino-acid polypeptide reads, in one-letter code: 4-hydroxy-tetrahydrodipicolinate synthase (292 aa).

A pyruvate-binding site is contributed by Thr-45. Catalysis depends on Tyr-133, which acts as the Proton donor/acceptor. The Schiff-base intermediate with substrate role is filled by Lys-161. Ile-203 contacts pyruvate.

Belongs to the DapA family. As to quaternary structure, homotetramer; dimer of dimers.

The protein localises to the cytoplasm. It catalyses the reaction L-aspartate 4-semialdehyde + pyruvate = (2S,4S)-4-hydroxy-2,3,4,5-tetrahydrodipicolinate + H2O + H(+). Its pathway is amino-acid biosynthesis; L-lysine biosynthesis via DAP pathway; (S)-tetrahydrodipicolinate from L-aspartate: step 3/4. Functionally, catalyzes the condensation of (S)-aspartate-beta-semialdehyde [(S)-ASA] and pyruvate to 4-hydroxy-tetrahydrodipicolinate (HTPA). In Nitrosomonas eutropha (strain DSM 101675 / C91 / Nm57), this protein is 4-hydroxy-tetrahydrodipicolinate synthase.